The chain runs to 292 residues: NAD kinase (292 aa).

Residue aspartate 73 is the Proton acceptor of the active site. Residues 73-74 (DG), 147-148 (NE), histidine 158, arginine 175, aspartate 177, 188-193 (TAYSLS), and glutamine 247 each bind NAD(+).

It belongs to the NAD kinase family. A divalent metal cation serves as cofactor.

The protein resides in the cytoplasm. It carries out the reaction NAD(+) + ATP = ADP + NADP(+) + H(+). Its function is as follows. Involved in the regulation of the intracellular balance of NAD and NADP, and is a key enzyme in the biosynthesis of NADP. Catalyzes specifically the phosphorylation on 2'-hydroxyl of the adenosine moiety of NAD to yield NADP. The sequence is that of NAD kinase from Sodalis glossinidius (strain morsitans).